The following is a 167-amino-acid chain: UPF0179 protein Pars_2336 (167 aa).

It belongs to the UPF0179 family.

The sequence is that of UPF0179 protein Pars_2336 from Pyrobaculum arsenaticum (strain DSM 13514 / JCM 11321 / PZ6).